The chain runs to 123 residues: Ribonuclease P protein component 2 (123 aa).

This sequence belongs to the eukaryotic/archaeal RNase P protein component 2 family. Consists of a catalytic RNA component and at least 4-5 protein subunits.

It localises to the cytoplasm. The catalysed reaction is Endonucleolytic cleavage of RNA, removing 5'-extranucleotides from tRNA precursor.. Functionally, part of ribonuclease P, a protein complex that generates mature tRNA molecules by cleaving their 5'-ends. The polypeptide is Ribonuclease P protein component 2 (Sulfurisphaera tokodaii (strain DSM 16993 / JCM 10545 / NBRC 100140 / 7) (Sulfolobus tokodaii)).